A 994-amino-acid chain; its full sequence is Regulator of telomere elongation helicase 1 homolog (994 aa).

The Helicase ATP-binding domain occupies 15–324; the sequence is SKTSIKFPFE…KLIENLRTED (310 aa). Residue 50-57 participates in ATP binding; sequence SPTGTGKT. [4Fe-4S] cluster is bound by residues C142, C160, C169, and C208. A DEAH box motif is present at residues 251 to 254; it reads DEAH. Positions 818-831 are enriched in basic and acidic residues; sequence KIEKKEKIEPRPIK. The disordered stretch occupies residues 818–896; sequence KIEKKEKIEP…HVVSGSEPPK (79 aa). The segment covering 833-844 has biased composition (polar residues); it reads DSSSSSVFSLPT. The span at 847 to 856 shows a compositional bias: basic and acidic residues; sequence DELKVKKWEQ. Composition is skewed to polar residues over residues 859–869 and 880–889; these read DSQTNVSSSSD and PGNSSGQHVV.

The protein belongs to the helicase family. RAD3/XPD subfamily.

It localises to the nucleus. It catalyses the reaction ATP + H2O = ADP + phosphate + H(+). A probable ATP-dependent DNA helicase implicated in DNA repair and the maintenance of genomic stability. Acts as an anti-recombinase to counteract toxic recombination and limit crossover during meiosis. Regulates meiotic recombination and crossover homeostasis by physically dissociating strand invasion events and thereby promotes noncrossover repair by meiotic synthesis dependent strand annealing (SDSA) as well as disassembly of D loop recombination intermediates. This Caenorhabditis briggsae protein is Regulator of telomere elongation helicase 1 homolog.